The primary structure comprises 109 residues: Phosphoribosyl-AMP cyclohydrolase (109 aa).

Aspartate 80 is a Mg(2+) binding site. Cysteine 81 contributes to the Zn(2+) binding site. Mg(2+)-binding residues include aspartate 82 and aspartate 84. The Zn(2+) site is built by cysteine 97 and cysteine 104.

It belongs to the PRA-CH family. Homodimer. Requires Mg(2+) as cofactor. Zn(2+) is required as a cofactor.

It localises to the cytoplasm. The catalysed reaction is 1-(5-phospho-beta-D-ribosyl)-5'-AMP + H2O = 1-(5-phospho-beta-D-ribosyl)-5-[(5-phospho-beta-D-ribosylamino)methylideneamino]imidazole-4-carboxamide. It functions in the pathway amino-acid biosynthesis; L-histidine biosynthesis; L-histidine from 5-phospho-alpha-D-ribose 1-diphosphate: step 3/9. In terms of biological role, catalyzes the hydrolysis of the adenine ring of phosphoribosyl-AMP. The polypeptide is Phosphoribosyl-AMP cyclohydrolase (Clostridium botulinum (strain Alaska E43 / Type E3)).